A 263-amino-acid polypeptide reads, in one-letter code: Receptor expression-enhancing protein 3-A (263 aa).

2 helical membrane passes run 2 to 22 (VSWI…PAYF) and 35 to 55 (YVRW…EAIA). 2 disordered regions span residues 161-228 (GDET…SMRS) and 240-263 (YASL…AHHL). A compositionally biased stretch (acidic residues) spans 199 to 214 (DDNTDEDVEVNSEDEV). Positions 242-251 (SLKHKPKKRP) are enriched in basic residues.

It belongs to the DP1 family.

The protein localises to the endoplasmic reticulum membrane. Its function is as follows. Microtubule-binding protein required to ensure proper cell division and nuclear envelope reassembly by sequestering the endoplasmic reticulum away from chromosomes during mitosis. Probably acts by clearing the endoplasmic reticulum membrane from metaphase chromosomes. The protein is Receptor expression-enhancing protein 3-A (reep3-a) of Xenopus laevis (African clawed frog).